The following is a 488-amino-acid chain: Ribulose bisphosphate carboxylase large chain (488 aa).

N127 and T177 together coordinate substrate. Catalysis depends on K179, which acts as the Proton acceptor. Position 181 (K181) interacts with substrate. Positions 205, 207, and 208 each coordinate Mg(2+). K205 carries the N6-carboxylysine modification. H297 acts as the Proton acceptor in catalysis. R298, H330, and S382 together coordinate substrate.

This sequence belongs to the RuBisCO large chain family. Type I subfamily. Heterohexadecamer of 8 large chains and 8 small chains. Mg(2+) serves as cofactor.

The protein resides in the plastid. Its subcellular location is the chloroplast. It carries out the reaction 2 (2R)-3-phosphoglycerate + 2 H(+) = D-ribulose 1,5-bisphosphate + CO2 + H2O. It catalyses the reaction D-ribulose 1,5-bisphosphate + O2 = 2-phosphoglycolate + (2R)-3-phosphoglycerate + 2 H(+). Functionally, ruBisCO catalyzes two reactions: the carboxylation of D-ribulose 1,5-bisphosphate, the primary event in carbon dioxide fixation, as well as the oxidative fragmentation of the pentose substrate in the photorespiration process. Both reactions occur simultaneously and in competition at the same active site. The protein is Ribulose bisphosphate carboxylase large chain of Pyropia yezoensis (Susabi-nori).